Consider the following 275-residue polypeptide: Elongation factor Ts (275 aa).

Residues 76-79 (TDFV) form an involved in Mg(2+) ion dislocation from EF-Tu region.

This sequence belongs to the EF-Ts family.

The protein resides in the cytoplasm. In terms of biological role, associates with the EF-Tu.GDP complex and induces the exchange of GDP to GTP. It remains bound to the aminoacyl-tRNA.EF-Tu.GTP complex up to the GTP hydrolysis stage on the ribosome. This chain is Elongation factor Ts, found in Mycolicibacterium paratuberculosis (strain ATCC BAA-968 / K-10) (Mycobacterium paratuberculosis).